We begin with the raw amino-acid sequence, 339 residues long: Nitrilase (339 aa).

The CN hydrolase domain maps to 7-277 (YRVAAVQASP…EGITYADIDL (271 aa)). The active-site Proton acceptor is the glutamate 47. Lysine 128 functions as the Proton donor in the catalytic mechanism. Cysteine 162 acts as the Nucleophile in catalysis.

Belongs to the carbon-nitrogen hydrolase superfamily. Nitrilase family.

The enzyme catalyses a nitrile + 2 H2O = a carboxylate + NH4(+). This Bacillus sp. (strain OxB-1) protein is Nitrilase (nit).